The chain runs to 953 residues: Translation initiation factor IF-2 (953 aa).

Disordered regions lie at residues 48–212 and 279–367; these read SSFS…KIDF and TKLK…FHEL. Basic and acidic residues-rich tracts occupy residues 80-89, 98-111, and 140-188; these read TGSEHVEKTQ, FKAE…EQAA, and QGDK…ENHK. 2 stretches are compositionally biased toward polar residues: residues 191–207 and 282–291; these read RFTN…QSKS and KSSNISAKST. Residues 300-317 are compositionally biased toward basic and acidic residues; it reads ARPEKNRELTHHSQEGQK. Low complexity predominate over residues 322 to 338; that stretch reads SWNSQNQVRNQKNSNWN. Basic residues predominate over residues 339 to 348; it reads KNKKTKKGKN. Residues 454-623 enclose the tr-type G domain; sequence ERAPVVTIMG…LLVAEVEELK (170 aa). A G1 region spans residues 463–470; the sequence is GHVDHGKT. 463–470 contributes to the GTP binding site; the sequence is GHVDHGKT. The interval 488–492 is G2; the sequence is GITQH. The tract at residues 509-512 is G3; sequence DTPG. Residues 509-513 and 563-566 each bind GTP; these read DTPGH and NKID. Positions 563 to 566 are G4; sequence NKID. The tract at residues 599–601 is G5; it reads SAK.

This sequence belongs to the TRAFAC class translation factor GTPase superfamily. Classic translation factor GTPase family. IF-2 subfamily.

The protein localises to the cytoplasm. In terms of biological role, one of the essential components for the initiation of protein synthesis. Protects formylmethionyl-tRNA from spontaneous hydrolysis and promotes its binding to the 30S ribosomal subunits. Also involved in the hydrolysis of GTP during the formation of the 70S ribosomal complex. The chain is Translation initiation factor IF-2 from Streptococcus pyogenes serotype M3 (strain ATCC BAA-595 / MGAS315).